The sequence spans 183 residues: Ribosome maturation factor RimP (183 aa).

The protein belongs to the RimP family.

Its subcellular location is the cytoplasm. In terms of biological role, required for maturation of 30S ribosomal subunits. The polypeptide is Ribosome maturation factor RimP (Mycobacterium bovis (strain ATCC BAA-935 / AF2122/97)).